The sequence spans 176 residues: MTTIVSVRRHGKVVMGGDGQVSLGNTVMKGNAKKVRRLYHGQVLAGFAGATADAFTLFERFEGQLEKHQGHLVRAAVELAKEWRTDRSLSRLEAMLAVANKDASLIITGNGDVVEPEHGLIAMGSGGGYAQAAASALLKKTDLSAREIVETALGIAGDICVFTNHNQTIEEQDLAE.

Thr2 is a catalytic residue. Residues Gly157, Cys160, and Thr163 each contribute to the Na(+) site.

It belongs to the peptidase T1B family. HslV subfamily. In terms of assembly, a double ring-shaped homohexamer of HslV is capped on each side by a ring-shaped HslU homohexamer. The assembly of the HslU/HslV complex is dependent on binding of ATP.

The protein localises to the cytoplasm. It carries out the reaction ATP-dependent cleavage of peptide bonds with broad specificity.. Its activity is regulated as follows. Allosterically activated by HslU binding. In terms of biological role, protease subunit of a proteasome-like degradation complex believed to be a general protein degrading machinery. This chain is ATP-dependent protease subunit HslV, found in Pseudomonas fluorescens (strain SBW25).